A 567-amino-acid polypeptide reads, in one-letter code: Berberine bridge enzyme-like D-1 (567 aa).

The signal sequence occupies residues 1–33 (MKRNISMFLQLLLIILMMISFLFTSLLVPSVSA). A disulfide bridge connects residues C42 and C103. N-linked (GlcNAc...) asparagine glycosylation is present at N50. An FAD-binding PCMH-type domain is found at 81–257 (SKPKPTVIIV…YAWKIRLLKV (177 aa)). At H118 the chain carries Pros-8alpha-FAD histidine. 2 N-linked (GlcNAc...) asparagine glycosylation sites follow: N364 and N378.

The protein belongs to the oxygen-dependent FAD-linked oxidoreductase family. It depends on FAD as a cofactor. As to expression, mostly expressed in roots at low levels.

It localises to the vacuole. Its pathway is alkaloid biosynthesis; nicotine biosynthesis. In terms of biological role, involved in the biosynthesis of pyridine alkaloid natural products, leading mainly to the production of anabasine, anatabine, nicotine and nornicotine, effective deterrents against herbivores with antiparasitic and pesticide properties (neurotoxins); nornicotine serves as the precursor in the synthesis of the carcinogen compound N'-nitrosonornicotine (NNN). Catalyzes a late oxidation step subsequent to the pyridine ring condensation reaction in the biosynthesis of alkaloids. This chain is Berberine bridge enzyme-like D-1, found in Nicotiana tabacum (Common tobacco).